The primary structure comprises 1244 residues: Structural polyprotein (1244 aa).

Residues 1–113 (MNSVFYNPFG…GKRQRTALKF (113 aa)) form a disordered region. Over residues 35–44 (GLTTQIQQLT) the composition is skewed to polar residues. The host transcription inhibition stretch occupies residues 35–69 (GLTTQIQQLTRAVRALVLDNATRRQRPAPRTRPRK). Over residues 57–81 (RRQRPAPRTRPRKPKTQKPKPKKQN) the composition is skewed to basic residues. The Nuclear localization signal signature appears at 62 to 103 (APRTRPRKPKTQKPKPKKQNQKPPQQQKKGKNQPQQPKKPKP). The segment covering 82 to 97 (QKPPQQQKKGKNQPQQ) has biased composition (low complexity). A binding to the viral RNA region spans residues 85–118 (PQQQKKGKNQPQQPKKPKPGKRQRTALKFEADRT). The segment covering 99 to 109 (KKPKPGKRQRT) has biased composition (basic residues). Residues 103–117 (PGKRQRTALKFEADR) form a ribosome-binding region. The Peptidase S3 domain maps to 117 to 267 (RTFVGKNEDG…KTTHEDTVEW (151 aa)). H144 acts as the Charge relay system in catalysis. A Nuclear export signal motif is present at residues 149 to 159 (IDHPALAKLKF). The interval 160–165 (TKSSSY) is interaction with spike glycoprotein E2. D166 (charge relay system) is an active-site residue. The tract at residues 188–198 (PEVFYNWHHGA) is dimerization of the capsid protein. The active-site Charge relay system is the S218. A dimerization of the capsid protein region spans residues 224 to 228 (DNSGK). An interaction with spike glycoprotein E2 region spans residues 252–256 (KKGAA). The tract at residues 268 to 280 (SRAITAMCILQNV) is functions as an uncleaved signal peptide for the precursor of protein E3/E2. The Extracellular segment spans residues 268 to 696 (SRAITAMCIL…HYYHLYPFYT (429 aa)). The N-linked (GlcNAc...) asparagine; by host glycan is linked to N279. 4 disulfides stabilise this stretch: C284/C290, C481/C595, C530/C555, and C532/C549. Residue N525 is glycosylated (N-linked (GlcNAc...) asparagine; by host). The N-linked (GlcNAc...) asparagine; by host glycan is linked to N647. Residues 697-717 (VTVLSGMGLAICAGLVISILC) form a helical membrane-spanning segment. Residues 718-751 (CCKARRDCLTPYQLAPNATVPFLVTLCCCFQRTS) lie on the Cytoplasmic side of the membrane. The interaction with the capsid protein stretch occupies residues 720–724 (KARRD). Residues C725, C745, and C746 are each lipidated (S-palmitoyl cysteine; by host). A disulfide bridge connects residues C725 and C746. At 752–764 (ADEFTDTMGYLWQ) the chain is on the extracellular side. The next 2 membrane-spanning stretches (helical) occupy residues 765 to 785 (HSQTMFWIQLVIPLAAVITLV) and 786 to 805 (RCCSCCLPFLLVASPPNKAD). Residues 806-1218 (AYEHTITVPN…KTSWNWITAL (413 aa)) lie on the Extracellular side of the membrane. Intrachain disulfides connect C855–C920, C868–C900, C869–C902, and C874–C884. The interval 890-907 (VYPFLWGGAQCFCDSENS) is E1 fusion peptide loop. N-linked (GlcNAc...) asparagine; by host glycosylation is found at N945 and N1051. 4 disulfides stabilise this stretch: C1065–C1077, C1106–C1181, C1111–C1185, and C1133–C1175. The chain crosses the membrane as a helical span at residues 1219–1239 (MGGISSIAAIAAIVLVIALVF). At 1240-1244 (TAQHR) the chain is on the cytoplasmic side.

As to quaternary structure, homodimer. Homomultimer. Interacts with host karyopherin KPNA4; this interaction allows the nuclear import of the viral capsid protein. Interacts with spike glycoprotein E2. Interacts with host IRAK1; the interaction leads to inhibition of IRAK1-dependent signaling. In terms of assembly, the precursor of protein E3/E2 and E1 form a heterodimer shortly after synthesis. The precursor of protein E3/E2 and E1 form a heterodimer shortly after synthesis. Processing of the precursor of protein E3/E2 into E2 and E3 results in a heterodimer of the spike glycoproteins E2 and E1. Spike at virion surface are constituted of a trimer of E2-E1 heterodimers. After target cell attachment and endocytosis, E1 change conformation to form homotrimers. Interacts with 6K protein. As to quaternary structure, interacts with spike glycoprotein E1. Processing of the precursor of protein E3/E2 into E2 and E3 results in a heterodimer of the spike glycoproteins E2 and E1. Spike at virion surface are constituted of a trimer of E2-E1 heterodimers. Interacts with 6K protein. In terms of assembly, oligomer. Interacts with spike glycoprotein E1. Interacts with spike glycoprotein E2. In terms of processing, structural polyprotein: Specific enzymatic cleavages in vivo yield mature proteins. Capsid protein is auto-cleaved during polyprotein translation, unmasking a signal peptide at the N-terminus of the precursor of E3/E2. The remaining polyprotein is then targeted to the host endoplasmic reticulum, where host signal peptidase cleaves it into pE2, 6K and E1 proteins. pE2 is further processed to mature E3 and E2 by host furin in trans-Golgi vesicle. Palmitoylated via thioester bonds. These palmitoylations may induce disruption of the C-terminus transmembrane. This would result in the reorientation of E2 C-terminus from lumenal to cytoplasmic side. Post-translationally, N-glycosylated. In terms of processing, palmitoylated via thioester bonds.

The protein resides in the virion. It is found in the host cytoplasm. The protein localises to the host cell membrane. It localises to the host nucleus. Its subcellular location is the virion membrane. The protein resides in the host Golgi apparatus. It is found in the host trans-Golgi network. The protein localises to the host endoplasmic reticulum. It carries out the reaction Autocatalytic release of the core protein from the N-terminus of the togavirus structural polyprotein by hydrolysis of a -Trp-|-Ser- bond.. Its function is as follows. Forms an icosahedral capsid with a T=4 symmetry composed of 240 copies of the capsid protein surrounded by a lipid membrane through which penetrate 80 spikes composed of trimers of E1-E2 heterodimers. The capsid protein binds to the viral RNA genome at a site adjacent to a ribosome binding site for viral genome translation following genome release. Possesses a protease activity that results in its autocatalytic cleavage from the nascent structural protein. Following its self-cleavage, the capsid protein transiently associates with ribosomes, and within several minutes the protein binds to viral RNA and rapidly assembles into icosahedric core particles. The resulting nucleocapsid eventually associates with the cytoplasmic domain of the spike glycoprotein E2 at the cell membrane, leading to budding and formation of mature virions. In case of infection, new virions attach to target cells and after clathrin-mediated endocytosis their membrane fuses with the host endosomal membrane. This leads to the release of the nucleocapsid into the cytoplasm, followed by an uncoating event necessary for the genomic RNA to become accessible. The uncoating might be triggered by the interaction of capsid proteins with ribosomes. Binding of ribosomes would release the genomic RNA since the same region is genomic RNA-binding and ribosome-binding. Specifically inhibits interleukin-1 receptor-associated kinase 1/IRAK1-dependent signaling during viral entry, representing a means by which the alphaviruses may evade innate immune detection and activation prior to viral gene expression. In terms of biological role, provides the signal sequence for the translocation of the precursor of protein E3/E2 to the host endoplasmic reticulum. Furin-cleaved E3 remains associated with spike glycoprotein E1 and mediates pH protection of the latter during the transport via the secretory pathway. After virion release from the host cell, the assembly protein E3 is gradually released in the extracellular space. Plays a role in viral attachment to target host cell, by binding to the cell receptor. Synthesized as a p62 precursor which is processed by furin at the cell membrane just before virion budding, giving rise to E2-E1 heterodimer. The p62-E1 heterodimer is stable, whereas E2-E1 is unstable and dissociate at low pH. p62 is processed at the last step, presumably to avoid E1 fusion activation before its final export to cell surface. E2 C-terminus contains a transitory transmembrane that would be disrupted by palmitoylation, resulting in reorientation of the C-terminal tail from lumenal to cytoplasmic side. This step is critical since E2 C-terminus is involved in budding by interacting with capsid proteins. This release of E2 C-terminus in cytoplasm occurs lately in protein export, and precludes premature assembly of particles at the endoplasmic reticulum membrane. Functionally, acts as a viroporin that participates in virus glycoprotein processing and transport to the plasma membrane, cell permeabilization and budding of viral particles. Disrupts the calcium homeostasis of the cell, probably at the endoplasmic reticulum level. This leads to cytoplasmic calcium elevation. Because of its lipophilic properties, the 6K protein is postulated to influence the selection of lipids that interact with the transmembrane domains of the glycoproteins, which, in turn, affects the deformability of the bilayer required for the extreme curvature that occurs as budding proceeds. Present in low amount in virions, about 3% compared to viral glycoproteins. Its function is as follows. Class II viral fusion protein. Fusion activity is inactive as long as E1 is bound to E2 in mature virion. After virus attachment to target cell and endocytosis, acidification of the endosome induce dissociation of E1/E2 heterodimer and concomitant trimerization of the E1 subunits. This E1 trimer is fusion active, and promotes release of viral nucleocapsid in cytoplasm after endosome and viral membrane fusion. Efficient fusion requires the presence of cholesterol and sphingolipid in the target membrane. The protein is Structural polyprotein of Aedes (AURAV).